Consider the following 793-residue polypeptide: Splicing factor 3A subunit 1 (793 aa).

The segment at 1–43 (MPAGPVQAVPPPPPVPTEPKQPTEEEASSKEDSAPSKPVVGII) is disordered. A compositionally biased stretch (pro residues) spans 8 to 19 (AVPPPPPVPTEP). A Glycyl lysine isopeptide (Lys-Gly) (interchain with G-Cter in SUMO2) cross-link involves residue K20. Residues 21 to 34 (QPTEEEASSKEDSA) show a composition bias toward basic and acidic residues. Residues 52-94 (IVDKTASFVARNGPEFEARIRQNEINNPKFNFLNPNDPYHAYY) form an SURP motif 1 repeat. K55 is subject to N6-acetyllysine. K131 participates in a covalent cross-link: Glycyl lysine isopeptide (Lys-Gly) (interchain with G-Cter in SUMO2). The SURP motif 2 repeat unit spans residues 166-208 (VVKLTAQFVARNGRQFLTQLMQKEQRNYQFDFLRPQHSLFNYF). Residues 318 to 428 (GESEEVEMEV…KIPASKMQEH (111 aa)) form a disordered region. Phosphoserine is present on residues S320, S329, and S359. Acidic residues-rich tracts occupy residues 320 to 334 (SEEV…EEDD) and 354 to 364 (DMDEGSDDEEE). The span at 368–384 (VPPPPETPMPPPLPPTP) shows a compositional bias: pro residues. Over residues 388–397 (IVRKDYDPKA) the composition is skewed to basic and acidic residues. S413 carries the post-translational modification Phosphoserine. K424 is covalently cross-linked (Glycyl lysine isopeptide (Lys-Gly) (interchain with G-Cter in SUMO2)). The residue at position 451 (S451) is a Phosphoserine. Phosphotyrosine is present on Y456. A compositionally biased stretch (basic and acidic residues) spans 488 to 502 (IGEEEIQKPEEKVTW). Disordered stretches follow at residues 488-518 (IGEE…AAQA), 530-584 (HKAK…TMPP), and 665-688 (APMP…LKTE). K499 participates in a covalent cross-link: Glycyl lysine isopeptide (Lys-Gly) (interchain with G-Cter in SUMO2). A Phosphoserine modification is found at S508. The span at 509–518 (MARTQQAAQA) shows a compositional bias: polar residues. Residue K542 forms a Glycyl lysine isopeptide (Lys-Gly) (interchain with G-Cter in SUMO2) linkage. Over residues 665 to 675 (APMPPVHPPPP) the composition is skewed to pro residues. A required and sufficient for nuclear import region spans residues 680–702 (PTSKKLKTEDSLMPEEEFLRRNK). A Glycyl lysine isopeptide (Lys-Gly) (interchain with G-Cter in SUMO2) cross-link involves residue K686. Residues 707 to 793 (IKVQVPNMQD…ALKERGGRKK (87 aa)) enclose the Ubiquitin-like domain. Y759 carries the post-translational modification Phosphotyrosine.

In terms of assembly, component of the 17S U2 SnRNP complex, a ribonucleoprotein complex that contains small nuclear RNA (snRNA) U2 and a number of specific proteins. Part of the SF3A subcomplex of the 17S U2 SnRNP complex which is composed of three subunits; SF3A3/SAP61, SF3A2/SAP62 and SF3A1/SAP114. SF3A associates with the splicing factor SF3B and a 12S RNA unit to form the mature 17S U2 small nuclear ribonucleoprotein complex (17S U2 snRNP). SF3A1 functions as a scaffold that interacts directly with both SF3A2 and SF3A3. Identified in the spliceosome 'E' complex, a precursor of the spliceosome 'A' complex. Identified in the spliceosome 'A' and 'B' complexes. Identified in the spliceosome 'C' complex. Interacts with P2RX6; resulting in a reduction of the splicing activity. As to expression, ubiquitously expressed.

The protein localises to the nucleus. The protein resides in the nucleus speckle. Its function is as follows. Component of the 17S U2 SnRNP complex of the spliceosome, a large ribonucleoprotein complex that removes introns from transcribed pre-mRNAs. The 17S U2 SnRNP complex (1) directly participates in early spliceosome assembly and (2) mediates recognition of the intron branch site during pre-mRNA splicing by promoting the selection of the pre-mRNA branch-site adenosine, the nucleophile for the first step of splicing. Within the 17S U2 SnRNP complex, SF3A1 is part of the SF3A subcomplex that contributes to the assembly of the 17S U2 snRNP, and the subsequent assembly of the pre-spliceosome 'E' complex and the pre-catalytic spliceosome 'A' complex. Involved in pre-mRNA splicing as a component of pre-catalytic spliceosome 'B' complexes. The sequence is that of Splicing factor 3A subunit 1 (SF3A1) from Homo sapiens (Human).